A 160-amino-acid polypeptide reads, in one-letter code: Major pollen allergen Car b 1 isoform 2 (160 aa).

It belongs to the BetVI family.

This chain is Major pollen allergen Car b 1 isoform 2, found in Carpinus betulus (European hornbeam).